The primary structure comprises 352 residues: Plant intracellular Ras-group-related LRR protein 1 (352 aa).

The interval Met-1 to His-25 is disordered. LRR repeat units lie at residues Lys-29–Leu-52, Gly-53–Arg-75, Leu-77–Leu-99, Ser-100–Cys-122, Ala-124–Leu-146, His-147–Met-169, Ala-171–Leu-192, Leu-195–Leu-217, Ala-218–Thr-241, and Leu-243–Gln-263. The short motif at Gly-264–Tyr-271 is the GVYW; degenerate element.

It belongs to the SHOC2 family. As to expression, widely expressed but at a lower level in seedlings and stems.

Functionally, leucine-rich repeat protein that likely mediates protein interactions, possibly in the context of signal transduction. The sequence is that of Plant intracellular Ras-group-related LRR protein 1 (IRL1) from Oryza sativa subsp. japonica (Rice).